An 85-amino-acid polypeptide reads, in one-letter code: Large ribosomal subunit protein bL27 (85 aa).

Positions Met-1–Leu-21 are disordered.

This sequence belongs to the bacterial ribosomal protein bL27 family.

This chain is Large ribosomal subunit protein bL27, found in Geotalea uraniireducens (strain Rf4) (Geobacter uraniireducens).